Consider the following 380-residue polypeptide: Guanine nucleotide-binding protein subunit beta (380 aa).

WD repeat units follow at residues 64-103, 106-145, 155-195, 203-243, 247-286, 296-335, and 342-380; these read GHSG…KTHA, LHCP…DRDG, GHKG…RISI, GHTA…RAVR, GHEG…QLQV, NELP…VVLN, and SHEG…RKIV.

It belongs to the WD repeat G protein beta family. In terms of assembly, g proteins are composed of 3 units, alpha, beta and gamma. Interacts with the gamma subunits RGG1 and RGG2.

It is found in the cell membrane. Its function is as follows. Guanine nucleotide-binding proteins (G proteins) are involved as modulators or transducers in various transmembrane signaling systems. The beta and gamma chains are required for the GTPase activity, for replacement of GDP by GTP, and for G protein-effector interaction. The protein is Guanine nucleotide-binding protein subunit beta of Oryza sativa subsp. indica (Rice).